Reading from the N-terminus, the 396-residue chain is Tryptophan synthase beta chain (396 aa).

Lys86 is subject to N6-(pyridoxal phosphate)lysine.

Belongs to the TrpB family. In terms of assembly, tetramer of two alpha and two beta chains. It depends on pyridoxal 5'-phosphate as a cofactor.

It catalyses the reaction (1S,2R)-1-C-(indol-3-yl)glycerol 3-phosphate + L-serine = D-glyceraldehyde 3-phosphate + L-tryptophan + H2O. The protein operates within amino-acid biosynthesis; L-tryptophan biosynthesis; L-tryptophan from chorismate: step 5/5. The beta subunit is responsible for the synthesis of L-tryptophan from indole and L-serine. This Erwinia tasmaniensis (strain DSM 17950 / CFBP 7177 / CIP 109463 / NCPPB 4357 / Et1/99) protein is Tryptophan synthase beta chain.